The primary structure comprises 96 residues: Large ribosomal subunit protein eL14 (96 aa).

This sequence belongs to the eukaryotic ribosomal protein eL14 family.

The polypeptide is Large ribosomal subunit protein eL14 (Sulfolobus acidocaldarius (strain ATCC 33909 / DSM 639 / JCM 8929 / NBRC 15157 / NCIMB 11770)).